The chain runs to 128 residues: MSGYTPEEKLRLQQLRELRRRWLKDQELSPREPVLPPQRVSPVERFWNKFLQDGALWKNVIYKTYRHSIFAFTHVLIPVWIIHYYLKYHVTTKPYTIVEKKPRIFPGDTILETGEVIPPMKEFPDQHH.

An N-acetylserine modification is found at S2. K24 bears the N6-acetyllysine mark. A helical membrane pass occupies residues 64 to 86 (TYRHSIFAFTHVLIPVWIIHYYL).

The protein belongs to the complex I NDUFB6 subunit family. In terms of assembly, complex I is composed of 45 different subunits.

It localises to the mitochondrion inner membrane. Functionally, accessory subunit of the mitochondrial membrane respiratory chain NADH dehydrogenase (Complex I), that is believed not to be involved in catalysis. Complex I functions in the transfer of electrons from NADH to the respiratory chain. The immediate electron acceptor for the enzyme is believed to be ubiquinone. The polypeptide is NADH dehydrogenase [ubiquinone] 1 beta subcomplex subunit 6 (NDUFB6) (Bos taurus (Bovine)).